Here is a 460-residue protein sequence, read N- to C-terminus: Cysteine--tRNA ligase (460 aa).

Residue Cys-27 participates in Zn(2+) binding. The short motif at 29 to 39 (PTVYDDAHLGH) is the 'HIGH' region element. Positions 202, 227, and 231 each coordinate Zn(2+). Positions 259–263 (KMSKS) match the 'KMSKS' region motif. Lys-262 is an ATP binding site.

It belongs to the class-I aminoacyl-tRNA synthetase family. Monomer. Requires Zn(2+) as cofactor.

Its subcellular location is the cytoplasm. The enzyme catalyses tRNA(Cys) + L-cysteine + ATP = L-cysteinyl-tRNA(Cys) + AMP + diphosphate. In Campylobacter lari (strain RM2100 / D67 / ATCC BAA-1060), this protein is Cysteine--tRNA ligase.